The chain runs to 1845 residues: Collagen alpha-1(XXVII) chain (1845 aa).

Positions 1–39 are cleaved as a signal peptide; the sequence is MGTGFARGARGTAASGPGGGFLFAWILVSFTCHLASTQG. Positions 40-609 are cleaved as a propeptide — N-terminal propeptide; that stretch reads APEDVDVLQR…LGPTPFPMLM (570 aa). One can recognise a Laminin G-like domain in the interval 72-237; sequence PSGFIFTQRA…NYCAHLRERC (166 aa). N-linked (GlcNAc...) asparagine glycosylation is present at Asn272. Disordered stretches follow at residues 299–478, 502–572, 608–774, and 827–1608; these read TKPL…VPKT, PPLG…RPST, LMGP…MGRP, and LMGG…HPIQ. The span at 312 to 323 shows a compositional bias: polar residues; that stretch reads HSSSQTPLSPAK. Low complexity-rich tracts occupy residues 327–343 and 356–372; these read RKTP…NSTR and TTTS…SVSP. An N-linked (GlcNAc...) asparagine glycan is attached at Asn340. Pro residues predominate over residues 429–439; the sequence is PRPPVPSPQPL. Over residues 444–454 the composition is skewed to polar residues; the sequence is GLSKKFTNPTV. Basic and acidic residues predominate over residues 554–564; it reads SARDASPRDLT. Collagen-like domains lie at 610–664, 673–732, 742–801, 817–876, 877–936, 937–996, 997–1038, 1039–1096, 1117–1176, 1177–1236, and 1240–1299; these read GPPG…GDPG, GAKG…PGPV, GYIG…PGPP, GYPG…PGPL, GKAG…EGPM, GPPG…VGEK, GDRG…PGSR, GLPG…GAKG, GSQG…PGLE, GDHG…QGEK, and GAKG…NGHK. The interval 610–1603 is triple-helical; the sequence is GPPGSKGDCG…RGRPGPPGPP (994 aa). Residues 639–654 show a composition bias toward pro residues; sequence RGPPGPYGNPGPPGPP. Low complexity-rich tracts occupy residues 677–690 and 699–719; these read NMGL…PGPL and PGAA…SPGA. A compositionally biased stretch (gly residues) spans 865-874; the sequence is GLPGGRGKPG. The segment covering 896–909 has biased composition (low complexity); it reads FPGDIGPPGDNGPE. Residues 1018-1027 are compositionally biased toward gly residues; that stretch reads GTPGGIGNPG. Low complexity-rich tracts occupy residues 1074 to 1086, 1112 to 1122, and 1152 to 1167; these read RGRP…QGAA, LPGEPGSQGPQ, and KGDL…QGLI. 2 stretches are compositionally biased toward basic and acidic residues: residues 1187–1212 and 1226–1238; these read LKGD…KGED and REGK…EKGQ. Composition is skewed to basic and acidic residues over residues 1311–1323 and 1335–1345; these read KGEK…DGKT and PVGDRGDRGEP. The region spanning 1325-1384 is the Collagen-like 12 domain; that stretch reads GPPGPPGDRGPVGDRGDRGEPGDPGYPGQEGVQGLRGEPGQQGQPGHPGPRGRPGPKGSK. Composition is skewed to low complexity over residues 1360–1369, 1395–1422, and 1438–1465; these read RGEPGQQGQP, KAGP…RQGP, and PGYQ…PGVA. Collagen-like domains follow at residues 1424-1483, 1484-1543, and 1544-1603; these read GTAG…SGLP, GQLG…KGIQ, and GPRG…PGPP. Low complexity predominate over residues 1557–1572; the sequence is IIGPPGMLGPSGLPGP. A compositionally biased stretch (pro residues) spans 1588-1605; it reads RGPPGPRGRPGPPGPPWH. Residues 1607–1845 constitute a propeptide, C-terminal propeptide; the sequence is IQFQQDDLGA…RLEVGPACFL (239 aa). In terms of domain architecture, Fibrillar collagen NC1 spans 1645–1845; that stretch reads GEIFKTLHYL…RLEVGPACFL (201 aa). Disulfide bonds link Cys1675–Cys1707, Cys1716–Cys1843, and Cys1752–Cys1796. Ca(2+) is bound by residues Asp1693, Asn1695, Cys1698, and Asp1701. Residue Asn1754 is glycosylated (N-linked (GlcNAc...) asparagine).

This sequence belongs to the fibrillar collagen family. Highly expressed in cartilage, eye and ear.

Its subcellular location is the secreted. It is found in the extracellular space. It localises to the extracellular matrix. Functionally, plays a role during the calcification of cartilage and the transition of cartilage to bone. The chain is Collagen alpha-1(XXVII) chain (Col27a1) from Mus musculus (Mouse).